The chain runs to 418 residues: Pigment epithelium-derived factor (418 aa).

Positions 1–19 (MQALVLLLCIGALLGHSSC) are cleaved as a signal peptide. Gln-20 is subject to Pyrrolidone carboxylic acid. The interval 20–39 (QNPASPPEEGSPDPDSTGAL) is disordered. Ser-24 and Ser-114 each carry phosphoserine; by CK2. Ser-227 is modified (phosphoserine; by PKA). N-linked (GlcNAc...) (complex) asparagine glycosylation is present at Asn-285. An O-glycosylated at one site region spans residues 371 to 383 (TTPSPGLQPAHLT).

Belongs to the serpin family. In terms of assembly, interacts with PNPLA2; this interaction stimulates the phospholipase A2 activity of PNPLA2. The N-terminus is blocked. Extracellular phosphorylation enhances antiangiogenic activity. Post-translationally, N- and O-glycosylated. O-glycosylated with a core 1 or possibly core 8 glycan. As to expression, retinal pigment epithelial cells and blood plasma.

It localises to the secreted. It is found in the melanosome. Functionally, neurotrophic protein; induces extensive neuronal differentiation in retinoblastoma cells. Potent inhibitor of angiogenesis. As it does not undergo the S (stressed) to R (relaxed) conformational transition characteristic of active serpins, it exhibits no serine protease inhibitory activity. This is Pigment epithelium-derived factor (SERPINF1) from Homo sapiens (Human).